The sequence spans 47 residues: Large ribosomal subunit protein bL27c-2 (47 aa).

This sequence belongs to the bacterial ribosomal protein bL27 family.

It localises to the plastid. The protein localises to the chloroplast. The polypeptide is Large ribosomal subunit protein bL27c-2 (Cyanidium caldarium (Red alga)).